The sequence spans 436 residues: Histidine--tRNA ligase (436 aa).

This sequence belongs to the class-II aminoacyl-tRNA synthetase family.

The protein localises to the cytoplasm. It carries out the reaction tRNA(His) + L-histidine + ATP = L-histidyl-tRNA(His) + AMP + diphosphate + H(+). The chain is Histidine--tRNA ligase from Thermococcus kodakarensis (strain ATCC BAA-918 / JCM 12380 / KOD1) (Pyrococcus kodakaraensis (strain KOD1)).